We begin with the raw amino-acid sequence, 751 residues long: Fusarisetin A cluster transcription factor fsa6 (751 aa).

The segment at 1–35 is disordered; the sequence is MADQAQDVRPTEWGPGKTPQGRARLPSSRPREKPQ. The segment at residues 38–66 is a DNA-binding region (zn(2)-C6 fungal-type); the sequence is CNLCRRRKLRCDRQRPCSSCAQRELGLSC. The span at 107 to 116 shows a compositional bias: polar residues; that stretch reads NVNAQDQVGA. Residues 107–153 are disordered; the sequence is NVNAQDQVGATPSPRGQPRGPDYPTPAAVHAPSTNEEPVSAAVSPAD.

The protein resides in the nucleus. Functionally, transcription factor that regulates the expression of the gene cluster that mediates the biosynthesis of fusarisetin A. In Fusarium sp. (strain FN080326), this protein is Fusarisetin A cluster transcription factor fsa6.